A 189-amino-acid polypeptide reads, in one-letter code: RNA-binding protein (189 aa).

The segment at 55–69 adopts a C4-type zinc-finger fold; sequence CICPSSNHLVDDCVC. Positions 114–189 are disordered; it reads FLTSVNPGES…DANTRKSKRK (76 aa). Over residues 158–167 the composition is skewed to basic and acidic residues; that stretch reads SSSERKRKEY. The span at 168 to 180 shows a compositional bias: low complexity; sequence SSNSETDLSSDSD.

This sequence belongs to the phytoreovirus RNA-binding protein family.

The protein localises to the host cytoplasm. Constituent of viral factories. Binds to ssRNA and dsRNA. This chain is RNA-binding protein, found in Alopecurus aequalis (Barnyard grass).